Consider the following 601-residue polypeptide: Elongation factor 4 (601 aa).

The tr-type G domain maps to 4-186; it reads SFIRNFAIIA…SIVHLVPPPK (183 aa). GTP is bound by residues 16 to 21 and 133 to 136; these read DHGKST and NKID.

Belongs to the TRAFAC class translation factor GTPase superfamily. Classic translation factor GTPase family. LepA subfamily.

The protein resides in the cell inner membrane. It carries out the reaction GTP + H2O = GDP + phosphate + H(+). Required for accurate and efficient protein synthesis under certain stress conditions. May act as a fidelity factor of the translation reaction, by catalyzing a one-codon backward translocation of tRNAs on improperly translocated ribosomes. Back-translocation proceeds from a post-translocation (POST) complex to a pre-translocation (PRE) complex, thus giving elongation factor G a second chance to translocate the tRNAs correctly. Binds to ribosomes in a GTP-dependent manner. In Koribacter versatilis (strain Ellin345), this protein is Elongation factor 4.